Reading from the N-terminus, the 610-residue chain is MGNSHCVPQAPRRLRASFSRKPSLKGNREDSARKLAGLFGTEARPDGDTAANRIFHYIPGTDIPGPEHHPENLEQPFLSVFKKGWRRTPVRNLGKVVHYSKVRLRFQHSQDISDCYLELFPSHLYFQAHGSEGLTFQGLLPLTELNICPTDGSREHAFQITGPLPAPLLVLCHSEAELSHWLYHLEKQMALLGLQRCHSAPPQGSLGDKPPWTQLRRAYGCGSMSGAICASRVKLQHLPSQEQWDRLLVLYPASLAIFSEEPEGLSFKGELPLSAIHINLEEKEKEIRSFLIEGHLINTIRVVCASYEDYSQWLLCLRTVSRRDGAHLPPGPESFPGLQKPTQLVGRGRGSLSSNGRSSWKLECPVFPTSQSLPESSVPTTIGFPAPPVPNQTDSNCVSTGQKKMKPSDSSPSPRGRAQREVSGSTVPLPLPLDLTKMSALNLDSGPEAQDHSLDIPHSPLYADPYTPPATSRHKITDIQGLDEFLCAIQTSPGPDLSSPFPPVSVSVPVSESSSGISSSPGPLGSHLLTKKGALQPRASQRHRGSFKSRGPQPSDFPQLVTPAREGKPSSLPPPPDEEAPIWNKTSSPSHPKWPQPRKPAVEGGFIQWI.

The tract at residues 1 to 30 (MGNSHCVPQAPRRLRASFSRKPSLKGNRED) is disordered. Glycine 2 is lipidated: N-myristoyl glycine. Residues 61–100 (TDIPGPEHHPENLEQPFLSVFKKGWRRTPVRNLGKVVHYS) are interaction with C1QBP. PH domains are found at residues 96–192 (VVHY…MALL) and 227–324 (AICA…SRRD). Tyrosine 307 carries the phosphotyrosine modification. Disordered stretches follow at residues 327–357 (HLPP…SNGR), 371–431 (QSLP…PLPL), 443–473 (LDSG…ATSR), and 493–610 (PGPD…IQWI). Polar residues-rich tracts occupy residues 371 to 380 (QSLPESSVPT) and 391 to 402 (NQTDSNCVSTGQ). Tyrosine 462 bears the Phosphotyrosine mark. A compositionally biased stretch (low complexity) spans 504-526 (VSVSVPVSESSSGISSSPGPLGS).

In terms of assembly, found in a complex with cytochrome c mRNA and various ribosomal proteins. Interacts with C1QBP, ELAVL1 and BID. In terms of processing, phosphorylation is essential for its mitochondrial localization and regulates its interaction with C1QBP. In terms of tissue distribution, testis and adipose tissue (at protein level). Ubiquitous.

It is found in the cell membrane. The protein localises to the mitochondrion membrane. Its subcellular location is the mitochondrion. Its function is as follows. Controls the stability of the leptin mRNA harboring an AU-rich element (ARE) in its 3' UTR, in cooperation with the RNA stabilizer ELAVL1. Decreases the stability of the leptin mRNA by antagonizing the function of ELAVL1 by inducing its atypical recruitment from the nucleus to the cytosol. Binds to cardiolipin (CL), phosphatidic acid (PA), phosphatidylinositol 4-phosphate (PtdIns(4)P) and phosphatidylserine (PS). The chain is Probable pleckstrin homology domain-containing family N member 1 (Plekhn1) from Mus musculus (Mouse).